The primary structure comprises 699 residues: Polyribonucleotide nucleotidyltransferase (699 aa).

Asp485 and Asp491 together coordinate Mg(2+). The KH domain maps to 552–611; it reads PRITTIKINPEKIRDVIGKGGAVIRALTEETGTTIELEDDGTVKIASSNGEATKEAIRRI. Residues 621–689 enclose the S1 motif domain; sequence GRIYNGKVIR…RQGRVRLSIK (69 aa).

It belongs to the polyribonucleotide nucleotidyltransferase family. As to quaternary structure, component of the RNA degradosome, which is a multiprotein complex involved in RNA processing and mRNA degradation. It depends on Mg(2+) as a cofactor.

The protein localises to the cytoplasm. The catalysed reaction is RNA(n+1) + phosphate = RNA(n) + a ribonucleoside 5'-diphosphate. Functionally, involved in mRNA degradation. Catalyzes the phosphorolysis of single-stranded polyribonucleotides processively in the 3'- to 5'-direction. In Shewanella sp. (strain MR-4), this protein is Polyribonucleotide nucleotidyltransferase.